The primary structure comprises 405 residues: Prostaglandin E2 receptor EP1 subtype (405 aa).

Over 1–39 (MSPCGLNLSLADEAATCATPRLPNTSVVLPTGDNGTSPA) the chain is Extracellular. 3 N-linked (GlcNAc...) asparagine glycosylation sites follow: asparagine 7, asparagine 24, and asparagine 34. Residues 40–62 (LPIFSMTLGAVSNVLALALLAQV) form a helical membrane-spanning segment. Residues 63 to 80 (AGRMRRRRSAATFLLFVA) are Cytoplasmic-facing. The helical transmembrane segment at 81 to 99 (SLLAIDLAGHVIPGALVLR) threads the bilayer. The Extracellular portion of the chain corresponds to 100 to 113 (LYTAGRAPAGGACH). Cysteines 112 and 190 form a disulfide. A helical transmembrane segment spans residues 114-135 (FLGGCMVFFGLCPLLLGCGMAV). Over 136-157 (ERCVGVTQPLIHAARVSVARAR) the chain is Cytoplasmic. Residues 158-179 (LALAVLAAMALAVALLPLVHVG) traverse the membrane as a helical segment. At 180 to 202 (RYELQYPGTWCFISLGPRGGWRQ) the chain is on the extracellular side. Residues 203 to 228 (ALLAGLFAGLGLAALLAALVCNTLSG) form a helical membrane-spanning segment. At 229-301 (LALLRARWRR…HAHDVEMVGQ (73 aa)) the chain is on the cytoplasmic side. Residues 243 to 287 (RFRKTAGPDDRRRWGSRGPRLASASSASSITSATATLRSSRGGGS) are disordered. Positions 262 to 282 (RLASASSASSITSATATLRSS) are enriched in low complexity. The chain crosses the membrane as a helical span at residues 302 to 323 (LVGIMVVSCICWSPLLVLVVLA). Residues 324-337 (IGGWNSNSLQRPLF) are Extracellular-facing. Residues 338-357 (LAVRLASWNQILDPWVYILL) traverse the membrane as a helical segment. The Cytoplasmic portion of the chain corresponds to 358–405 (RQAMLRQLLRLLPLRVSAKGGPTELGLTKSAWEASSLRSSRHSGFSHL).

It belongs to the G-protein coupled receptor 1 family. Post-translationally, phosphorylated. In terms of tissue distribution, abundant in kidney and in a lesser amount in lung.

It localises to the cell membrane. In terms of biological role, receptor for prostaglandin E2 (PGE2). The activity of this receptor is mediated by G(q) proteins which activate a phosphatidylinositol-calcium second messenger system. May play a role as an important modulator of renal function. Implicated the smooth muscle contractile response to PGE2 in various tissues. This Mus musculus (Mouse) protein is Prostaglandin E2 receptor EP1 subtype (Ptger1).